A 157-amino-acid polypeptide reads, in one-letter code: Phosphopantetheine adenylyltransferase (157 aa).

A substrate-binding site is contributed by serine 8. ATP contacts are provided by residues 8–9 (SF) and histidine 16. Substrate is bound by residues lysine 40, threonine 72, and arginine 86. ATP-binding positions include 87–89 (GLR), glutamate 97, and 122–128 (HSFLSSS).

Belongs to the bacterial CoaD family. As to quaternary structure, homohexamer. Requires Mg(2+) as cofactor.

Its subcellular location is the cytoplasm. The catalysed reaction is (R)-4'-phosphopantetheine + ATP + H(+) = 3'-dephospho-CoA + diphosphate. It functions in the pathway cofactor biosynthesis; coenzyme A biosynthesis; CoA from (R)-pantothenate: step 4/5. Functionally, reversibly transfers an adenylyl group from ATP to 4'-phosphopantetheine, yielding dephospho-CoA (dPCoA) and pyrophosphate. The sequence is that of Phosphopantetheine adenylyltransferase from Prochlorococcus marinus (strain MIT 9313).